Reading from the N-terminus, the 62-residue chain is Large ribosomal subunit protein eL37 (62 aa).

Residues Cys-20, Cys-23, Cys-35, and Cys-38 each coordinate Zn(2+). The C4-type zinc finger occupies 20 to 38 (CRRCGRRSYHVRKKACSAC).

Belongs to the eukaryotic ribosomal protein eL37 family. Requires Zn(2+) as cofactor.

In terms of biological role, binds to the 23S rRNA. This Methanococcus aeolicus (strain ATCC BAA-1280 / DSM 17508 / OCM 812 / Nankai-3) protein is Large ribosomal subunit protein eL37.